Reading from the N-terminus, the 209-residue chain is MKLRGLYAITDSQLLDDGRLLPYVEAALRGGARLLQYRDKSSDQARRLREAESLRELCERYGAQLIVNDDAELAARLGVGLHLGQTDGSLSAARALLGRQAIIGATCHAQLELAEQAVAEGASYVAFGRFFNSSTKPGAPAASVELLDQARPRLPLPITAIGGISLDTAPGLIARGVDLVAVIHALFAAASAAEVERRARAFSALFEPA.

Residues 36-40 (QYRDK) and N68 contribute to the 4-amino-2-methyl-5-(diphosphooxymethyl)pyrimidine site. The Mg(2+) site is built by D69 and D87. T106 is a binding site for 4-amino-2-methyl-5-(diphosphooxymethyl)pyrimidine. 133–135 (SST) is a binding site for 2-[(2R,5Z)-2-carboxy-4-methylthiazol-5(2H)-ylidene]ethyl phosphate. K136 contacts 4-amino-2-methyl-5-(diphosphooxymethyl)pyrimidine. G163 lines the 2-[(2R,5Z)-2-carboxy-4-methylthiazol-5(2H)-ylidene]ethyl phosphate pocket.

The protein belongs to the thiamine-phosphate synthase family. Mg(2+) is required as a cofactor.

It catalyses the reaction 2-[(2R,5Z)-2-carboxy-4-methylthiazol-5(2H)-ylidene]ethyl phosphate + 4-amino-2-methyl-5-(diphosphooxymethyl)pyrimidine + 2 H(+) = thiamine phosphate + CO2 + diphosphate. The catalysed reaction is 2-(2-carboxy-4-methylthiazol-5-yl)ethyl phosphate + 4-amino-2-methyl-5-(diphosphooxymethyl)pyrimidine + 2 H(+) = thiamine phosphate + CO2 + diphosphate. It carries out the reaction 4-methyl-5-(2-phosphooxyethyl)-thiazole + 4-amino-2-methyl-5-(diphosphooxymethyl)pyrimidine + H(+) = thiamine phosphate + diphosphate. The protein operates within cofactor biosynthesis; thiamine diphosphate biosynthesis; thiamine phosphate from 4-amino-2-methyl-5-diphosphomethylpyrimidine and 4-methyl-5-(2-phosphoethyl)-thiazole: step 1/1. In terms of biological role, condenses 4-methyl-5-(beta-hydroxyethyl)thiazole monophosphate (THZ-P) and 2-methyl-4-amino-5-hydroxymethyl pyrimidine pyrophosphate (HMP-PP) to form thiamine monophosphate (TMP). This is Thiamine-phosphate synthase from Pseudomonas aeruginosa (strain LESB58).